The following is a 102-amino-acid chain: uncharacterized protein (102 aa).

The helical transmembrane segment at 7-23 (IVFVSCVILGLAACSSQ) threads the bilayer.

It localises to the membrane. This is an uncharacterized protein from Haemophilus influenzae (strain ATCC 51907 / DSM 11121 / KW20 / Rd).